Consider the following 336-residue polypeptide: tRNA dimethylallyltransferase (336 aa).

ATP is bound at residue 19-26 (GPTASGKT). 21 to 26 (TASGKT) contacts substrate.

Belongs to the IPP transferase family. As to quaternary structure, monomer. The cofactor is Mg(2+).

The catalysed reaction is adenosine(37) in tRNA + dimethylallyl diphosphate = N(6)-dimethylallyladenosine(37) in tRNA + diphosphate. Functionally, catalyzes the transfer of a dimethylallyl group onto the adenine at position 37 in tRNAs that read codons beginning with uridine, leading to the formation of N6-(dimethylallyl)adenosine (i(6)A). This chain is tRNA dimethylallyltransferase, found in Bifidobacterium adolescentis (strain ATCC 15703 / DSM 20083 / NCTC 11814 / E194a).